The sequence spans 891 residues: MTDTTIQSFAAEMKMSVDQLIQWFSYIGILKTEIGIVTQREKEILFKYMNDNKSDISKKLILQRKTRSILSVSSVGGKNKKVQIEIRKKLTYVQSTLQETEFIDVKNKMVLDANREASSLIVRNNRLVNKKISNTLGPSSLTKISKKNHRYSELIEHKEKVIGKISRKFEDKSLQDSDETQLLKKKTKNCWDIELNNTNAISSNLGDSSSNSKLYCMPELLEKNNNQKLENERRNRSRVRTRYRNGGKLTKQHKRGNHHRLYEATSDEFGMEEELYIPNRVNKSKRKQSALVQVFNKPVQTITRDIIIGQTISVAELANKMSIKSSRVIKTMMQLGIIATINQIIDQDTAQLVAEEMGHNVILRRENELEELIMNDRDIDITSSDTTLANRAPIVTIMGHVDHGKTSLLDRIRSTKIASSEVGGITQSIGAYHVSTDNGMITFLDTPGHAAFTAMRARGVQITDIVVLVVAADDGVMPQTIEAIEHIKAANVPVVVAINKIDKSEANPERIKNDLNNHGLIPEEWGGDTQFIHVSATSGNGIDNLLDAILLQSDMLELKVVHHGMARAIVIESFLDKGRGPVVAVLVREGTLKCGDIILCGTEYGRVRAMRNEFGHEITSAGPSIPVELLGLSGSPASGESVIVVRNEKKAREVALYRQGKSREIKLARQKEPNIENIFSSIKNTSVVSELNLIVKSDTKGSSEAIRESLENLSTGGDVTIKILSSSIGGITETDVALAAASNAVIVGFNVRADPTARRIIEADQLDVRYYSVIYDLIDEVKQAVHGMLAPRYKHEIIGLAKVRNVFRSPKYGNVAGCMVVEGMIKRYKKIRVIRDNIVVHEGELESLRRFKDDVNEVRSGIECGIGIKNYKNIHSGDMIEVFDMVKISHV.

Positions asparagine 390 to lysine 559 constitute a tr-type G domain. The interval glycine 399 to threonine 406 is G1. Position 399–406 (glycine 399–threonine 406) interacts with GTP. The segment at glycine 424–serine 428 is G2. The segment at aspartate 445–glycine 448 is G3. GTP-binding positions include aspartate 445–histidine 449 and asparagine 499–aspartate 502. The G4 stretch occupies residues asparagine 499 to aspartate 502. The segment at serine 535 to threonine 537 is G5.

This sequence belongs to the TRAFAC class translation factor GTPase superfamily. Classic translation factor GTPase family. IF-2 subfamily.

The protein resides in the cytoplasm. In terms of biological role, one of the essential components for the initiation of protein synthesis. Protects formylmethionyl-tRNA from spontaneous hydrolysis and promotes its binding to the 30S ribosomal subunits. Also involved in the hydrolysis of GTP during the formation of the 70S ribosomal complex. The polypeptide is Translation initiation factor IF-2 (Blochmanniella pennsylvanica (strain BPEN)).